The sequence spans 73 residues: Putative antimicrobial peptide clone 5 (73 aa).

A signal peptide spans 1–22 (MQIKHLITLFFLVLIGADQCSA). Residues 45–73 (EVSPQIDQYRNFQKREAELEELLDRLPMY) constitute a propeptide that is removed on maturation.

The protein belongs to the non-disulfide-bridged peptide (NDBP) superfamily. Short antimicrobial peptide (group 4) family. Expressed by the venom gland.

The protein localises to the secreted. Functionally, antibacterial peptide. The protein is Putative antimicrobial peptide clone 5 of Tityus costatus (Brazilian scorpion).